Consider the following 504-residue polypeptide: Beta-xylosidase (504 aa).

Glu-160 functions as the Proton donor in the catalytic mechanism. Glu-280 serves as the catalytic Nucleophile.

This sequence belongs to the glycosyl hydrolase 39 family.

It catalyses the reaction Hydrolysis of (1-&gt;4)-beta-D-xylans, to remove successive D-xylose residues from the non-reducing termini.. This Geobacillus stearothermophilus (Bacillus stearothermophilus) protein is Beta-xylosidase (xynB).